The following is a 429-amino-acid chain: uncharacterized protein (429 aa).

Residues serine 116, aspartate 179, and histidine 206 each act as charge relay system in the active site.

This sequence belongs to the AB hydrolase 3 family.

The protein resides in the cytoplasm. Its subcellular location is the nucleus. This is an uncharacterized protein from Schizosaccharomyces pombe (strain 972 / ATCC 24843) (Fission yeast).